The primary structure comprises 622 residues: Chaperone protein HscA homolog (622 aa).

This sequence belongs to the heat shock protein 70 family.

Chaperone involved in the maturation of iron-sulfur cluster-containing proteins. Has a low intrinsic ATPase activity which is markedly stimulated by HscB. In Burkholderia multivorans (strain ATCC 17616 / 249), this protein is Chaperone protein HscA homolog.